Reading from the N-terminus, the 408-residue chain is Voltage-gated potassium channel subunit beta-1 (408 aa).

Threonine 97, tryptophan 98, glutamine 104, and aspartate 126 together coordinate NADP(+). Residue tyrosine 131 is the Proton donor/acceptor of the active site. The NADP(+) site is built by asparagine 199, serine 229, arginine 230, glutamine 255, tryptophan 284, serine 285, proline 286, leucine 287, alanine 288, cysteine 289, lysine 295, arginine 305, glycine 364, serine 366, glutamine 370, glutamate 373, and asparagine 374.

It belongs to the shaker potassium channel beta subunit family. Homotetramer. Interaction with tetrameric potassium channel alpha subunits gives rise to a heterooctamer. Identified in potassium channel complexes containing KCNA1, KCNA2, KCNA4, KCNA5, KCNA6, KCNAB1 and KCNAB2. Part of a complex containing KCNA1, KCNA4 and LGI1; interaction with LGI1 inhibits down-regulation of KCNA1 channel activity. Interacts with the dimer formed by GNB1 and GNG2; this enhances KCNA1 binding. Interacts with SQSTM1. Expression most abundant in aorta. Also high in left ventricle. Also detected in right ventricle, atrium, brain, skeletal muscle and kidney. Not detected in liver.

The protein localises to the cytoplasm. The protein resides in the membrane. It localises to the cell membrane. The catalysed reaction is a primary alcohol + NADP(+) = an aldehyde + NADPH + H(+). The enzyme catalyses a secondary alcohol + NADP(+) = a ketone + NADPH + H(+). Its function is as follows. Regulatory subunit of the voltage-gated potassium (Kv) Shaker channels composed of pore-forming and potassium-conducting alpha subunits and of regulatory beta subunits. The beta-1/KCNAB1 cytoplasmic subunit mediates closure of delayed rectifier potassium channels by physically obstructing the pore via its N-terminal domain and increases the speed of channel closure for other family members. Promotes the inactivation of Kv1.1/KCNA1, Kv1.2/KCNA2, Kv1.4/KCNA4, Kv1.5/KCNA5 and Kv1.6/KCNA6 alpha subunit-containing channels. Displays nicotinamide adenine dinucleotide phosphate (NADPH)-dependent aldoketoreductase activity by catalyzing the NADPH-dependent reduction of a variety of endogenous aldehydes and ketones. The binding of NADPH is required for efficient down-regulation of potassium channel activity. Oxidation of the bound NADPH restrains N-terminal domain from blocking the channel, thereby decreasing N-type inactivation of potassium channel activity. The chain is Voltage-gated potassium channel subunit beta-1 (KCNAB1) from Mustela putorius (European polecat).